The primary structure comprises 295 residues: sn-glycerol-3-phosphate transport system permease protein UgpA (295 aa).

Residues 1–11 lie on the Cytoplasmic side of the membrane; it reads MSSFRPVFRSR. A helical transmembrane segment spans residues 12–32; the sequence is WLPYLLVAPQLVITVIFFIWP. Topologically, residues 33–80 are periplasmic; it reads AGEALWYSLQSVDPFGFSSQFVGLENFVALFHDSYYLDAFWTTIKFSA. The ABC transmembrane type-1 domain occupies 76-284; sequence IKFSALVTFS…FLVIILTVVQ (209 aa). The helical transmembrane segment at 81–101 threads the bilayer; the sequence is LVTFSGLLVSLFFAALVDYVV. Topologically, residues 102–109 are cytoplasmic; it reads RGSRFYQT. The helical transmembrane segment at 110–130 threads the bilayer; it reads LMLLPYAVAPAVAAVLWIFLF. At 131–157 the chain is on the periplasmic side; sequence NPGRGLITHFLGEFGYDWNHAQNSGQA. Residues 158 to 178 form a helical membrane-spanning segment; it reads MFLVVFASVWKQISYNFLFFF. Over 179–207 the chain is Cytoplasmic; the sequence is AALQSIPRSLVEAAAIDGAGPIRRFFRLS. The chain crosses the membrane as a helical span at residues 208-228; it reads LPLIAPVSFFLLVVNLVYAFF. Residues 229-262 are Periplasmic-facing; that stretch reads DTFPVIDAATAGGPVQATTTLIYKIYREGFTGLD. The helical transmembrane segment at 263–283 threads the bilayer; it reads LSASAAQSVVLMFLVIILTVV. Over 284 to 295 the chain is Cytoplasmic; that stretch reads QFRYVESKVRYQ.

The protein belongs to the binding-protein-dependent transport system permease family. UgpAE subfamily. In terms of assembly, the complex is composed of two ATP-binding proteins (UgpC), two transmembrane proteins (UgpA and UgpE) and a solute-binding protein (UgpB).

Its subcellular location is the cell inner membrane. Its function is as follows. Part of the ABC transporter complex UgpBAEC involved in sn-glycerol-3-phosphate (G3P) import. Probably responsible for the translocation of the substrate across the membrane. The polypeptide is sn-glycerol-3-phosphate transport system permease protein UgpA (ugpA) (Salmonella choleraesuis (strain SC-B67)).